The following is a 409-amino-acid chain: F-box protein At3g17320 (409 aa).

One can recognise an F-box domain in the interval 1 to 47; the sequence is MTKISDLPRDLAEEVLSRVPVTYLRAIRFTCKKWNTLTKRRSFTKKL.

The sequence is that of F-box protein At3g17320 from Arabidopsis thaliana (Mouse-ear cress).